The chain runs to 86 residues: Small ribosomal subunit protein bS18 (86 aa).

This sequence belongs to the bacterial ribosomal protein bS18 family. In terms of assembly, part of the 30S ribosomal subunit. Forms a tight heterodimer with protein bS6.

In terms of biological role, binds as a heterodimer with protein bS6 to the central domain of the 16S rRNA, where it helps stabilize the platform of the 30S subunit. In Maridesulfovibrio salexigens (strain ATCC 14822 / DSM 2638 / NCIMB 8403 / VKM B-1763) (Desulfovibrio salexigens), this protein is Small ribosomal subunit protein bS18.